The chain runs to 246 residues: Acetoacetate decarboxylase (246 aa).

Lys-116 functions as the Schiff-base intermediate with acetoacetate in the catalytic mechanism.

Belongs to the ADC family. As to quaternary structure, homododecamer.

The enzyme catalyses acetoacetate + H(+) = acetone + CO2. Catalyzes the conversion of acetoacetate to acetone and carbon dioxide. This chain is Acetoacetate decarboxylase, found in Chromobacterium violaceum (strain ATCC 12472 / DSM 30191 / JCM 1249 / CCUG 213 / NBRC 12614 / NCIMB 9131 / NCTC 9757 / MK).